We begin with the raw amino-acid sequence, 111 residues long: Resistin-like alpha (111 aa).

The N-terminal stretch at 1–23 (MKTATCSLLICVFLLQLMVPVNT) is a signal peptide. Intrachain disulfides connect Cys-55–Cys-108, Cys-67–Cys-107, Cys-76–Cys-93, Cys-78–Cys-95, and Cys-82–Cys-97.

The protein belongs to the resistin/FIZZ family. In terms of assembly, monomer. As to expression, highest levels in adipose tissue.

It localises to the secreted. Functionally, probable hormone. Plays a role in pulmonary vascular remodeling. The chain is Resistin-like alpha (Retnla) from Rattus norvegicus (Rat).